Here is an 87-residue protein sequence, read N- to C-terminus: Small ribosomal subunit protein bS20 (87 aa).

The interval 1-26 (MANIKSAKKRAVQSEKARKHNASRRS) is disordered.

It belongs to the bacterial ribosomal protein bS20 family.

Binds directly to 16S ribosomal RNA. The protein is Small ribosomal subunit protein bS20 of Salmonella gallinarum (strain 287/91 / NCTC 13346).